Here is a 407-residue protein sequence, read N- to C-terminus: MKPTVWHHLRLCPHGHPDETIDDAAIAVDETGTIAWLGALSALPHGYAHWQREDLHGAWVTPGLVDCHTHLVYGGTRADEFAQRLAGVSYEEIARQGGGIVSTVRATRAADETTLFVQAAARLQPLLAEGVTAIEIKSGYGLDLASERKMLRVARQLGERFPVTVYTTFLGAHALPPEYAGRADEYIEEVCDRMLPTLADEGLVDAVDVFCERIGFSLAQTERVFEAATRRGLPVKLHAEQLSNAGGTALAARYRALSADHLEFLDEAGIEAMKAAGTVAVLLPGAYYFIRETQLPPIELLRKHGVPIALATDHNPGTSPLESLLLTLNMGCTLFRMTVPEVLQGVTRHAAAALGRADRHGALEVGRQADFAAWSVGSLAELAYWIGRPLCEQVVRGGTTVFRRMNG.

H68 and H70 together coordinate Fe(3+). H68 and H70 together coordinate Zn(2+). R77, Y140, and H173 together coordinate 4-imidazolone-5-propanoate. Y140 provides a ligand contact to N-formimidoyl-L-glutamate. Residue H238 participates in Fe(3+) binding. H238 is a binding site for Zn(2+). Position 241 (Q241) interacts with 4-imidazolone-5-propanoate. D313 is a binding site for Fe(3+). Residue D313 participates in Zn(2+) binding. Residues N315 and G317 each coordinate N-formimidoyl-L-glutamate. T318 provides a ligand contact to 4-imidazolone-5-propanoate.

It belongs to the metallo-dependent hydrolases superfamily. HutI family. The cofactor is Zn(2+). Requires Fe(3+) as cofactor.

The protein resides in the cytoplasm. It carries out the reaction 4-imidazolone-5-propanoate + H2O = N-formimidoyl-L-glutamate. The protein operates within amino-acid degradation; L-histidine degradation into L-glutamate; N-formimidoyl-L-glutamate from L-histidine: step 3/3. Its function is as follows. Catalyzes the hydrolytic cleavage of the carbon-nitrogen bond in imidazolone-5-propanoate to yield N-formimidoyl-L-glutamate. It is the third step in the universal histidine degradation pathway. This is Imidazolonepropionase from Burkholderia orbicola (strain MC0-3).